A 327-amino-acid chain; its full sequence is MSSSPNSPIACNLPRVTIVGAGRVGSTLAQRVAEKNLADVVLLDIIAGMPQGLALDLMEARGIEIHNRQIIGTNNYADTSGSQIVVITAGLPRKPGMSRDDLLKTNAKIVVEAAKNAIAHSPNAIFIVVTNPLDVMTYLAWQATGLPRDRIMGMAGVLDSARFEAFIALELGVLPADVKAMVLGSHGDLMVPLSRYATVNGIPITELLDAATIERLIERTRNGGAEIVELMQTGGAFFAPASATSVMVESILLNQSRLLPVAAYLQGEYGLEDVVIGVPCRLGCGGIESVLELILSDEEREGLHTSAQSVRQNIERSQEILANKNNS.

NAD(+)-binding positions include 20-25 (GAGRVG) and D44. Residues R93 and R99 each contribute to the substrate site. NAD(+) is bound by residues N106 and 129-131 (VTN). Residues N131 and R162 each coordinate substrate. H186 (proton acceptor) is an active-site residue.

The protein belongs to the LDH/MDH superfamily. MDH type 3 family.

The catalysed reaction is (S)-malate + NAD(+) = oxaloacetate + NADH + H(+). Its function is as follows. Catalyzes the reversible oxidation of malate to oxaloacetate. The protein is Malate dehydrogenase of Nostoc punctiforme (strain ATCC 29133 / PCC 73102).